Consider the following 492-residue polypeptide: ATP synthase subunit beta, chloroplastic (492 aa).

170-177 (GGAGVGKT) lines the ATP pocket.

Belongs to the ATPase alpha/beta chains family. In terms of assembly, F-type ATPases have 2 components, CF(1) - the catalytic core - and CF(0) - the membrane proton channel. CF(1) has five subunits: alpha(3), beta(3), gamma(1), delta(1), epsilon(1). CF(0) has four main subunits: a(1), b(1), b'(1) and c(9-12).

The protein resides in the plastid. It is found in the chloroplast thylakoid membrane. It carries out the reaction ATP + H2O + 4 H(+)(in) = ADP + phosphate + 5 H(+)(out). Produces ATP from ADP in the presence of a proton gradient across the membrane. The catalytic sites are hosted primarily by the beta subunits. This is ATP synthase subunit beta, chloroplastic from Marchantia polymorpha (Common liverwort).